Here is a 101-residue protein sequence, read N- to C-terminus: Large ribosomal subunit protein uL23 (101 aa).

This sequence belongs to the universal ribosomal protein uL23 family. As to quaternary structure, part of the 50S ribosomal subunit. Contacts protein L29, and trigger factor when it is bound to the ribosome.

Its function is as follows. One of the early assembly proteins it binds 23S rRNA. One of the proteins that surrounds the polypeptide exit tunnel on the outside of the ribosome. Forms the main docking site for trigger factor binding to the ribosome. The chain is Large ribosomal subunit protein uL23 from Histophilus somni (strain 129Pt) (Haemophilus somnus).